The primary structure comprises 129 residues: Phosphoribosyl-AMP cyclohydrolase (129 aa).

Asp76 contacts Mg(2+). Cys77 provides a ligand contact to Zn(2+). Asp78 and Asp80 together coordinate Mg(2+). 2 residues coordinate Zn(2+): Cys97 and Cys104.

It belongs to the PRA-CH family. In terms of assembly, homodimer. Mg(2+) serves as cofactor. Zn(2+) is required as a cofactor.

The protein resides in the cytoplasm. It catalyses the reaction 1-(5-phospho-beta-D-ribosyl)-5'-AMP + H2O = 1-(5-phospho-beta-D-ribosyl)-5-[(5-phospho-beta-D-ribosylamino)methylideneamino]imidazole-4-carboxamide. It participates in amino-acid biosynthesis; L-histidine biosynthesis; L-histidine from 5-phospho-alpha-D-ribose 1-diphosphate: step 3/9. Functionally, catalyzes the hydrolysis of the adenine ring of phosphoribosyl-AMP. This is Phosphoribosyl-AMP cyclohydrolase from Polaromonas sp. (strain JS666 / ATCC BAA-500).